A 309-amino-acid chain; its full sequence is Ribose-phosphate pyrophosphokinase (309 aa).

ATP is bound by residues 42–44 (DEE) and 102–103 (RQ). Residues H136 and D175 each coordinate Mg(2+). K199 is a catalytic residue. Residues R201, D226, and 230-234 (STGGT) contribute to the D-ribose 5-phosphate site.

Belongs to the ribose-phosphate pyrophosphokinase family. Class III (archaeal) subfamily. Mg(2+) serves as cofactor.

Its subcellular location is the cytoplasm. It catalyses the reaction D-ribose 5-phosphate + ATP = 5-phospho-alpha-D-ribose 1-diphosphate + AMP + H(+). It participates in metabolic intermediate biosynthesis; 5-phospho-alpha-D-ribose 1-diphosphate biosynthesis; 5-phospho-alpha-D-ribose 1-diphosphate from D-ribose 5-phosphate (route I): step 1/1. Its function is as follows. Involved in the biosynthesis of the central metabolite phospho-alpha-D-ribosyl-1-pyrophosphate (PRPP) via the transfer of pyrophosphoryl group from ATP to 1-hydroxyl of ribose-5-phosphate (Rib-5-P). This is Ribose-phosphate pyrophosphokinase from Aeropyrum pernix (strain ATCC 700893 / DSM 11879 / JCM 9820 / NBRC 100138 / K1).